The sequence spans 120 residues: NAD(P)H-quinone oxidoreductase subunit 3 (120 aa).

3 helical membrane passes run 6–26 (GYDA…LALV), 64–84 (MFAL…PWAV), and 89–109 (LGLL…VALA).

Belongs to the complex I subunit 3 family. NDH-1 can be composed of about 15 different subunits; different subcomplexes with different compositions have been identified which probably have different functions.

It is found in the cellular thylakoid membrane. It carries out the reaction a plastoquinone + NADH + (n+1) H(+)(in) = a plastoquinol + NAD(+) + n H(+)(out). It catalyses the reaction a plastoquinone + NADPH + (n+1) H(+)(in) = a plastoquinol + NADP(+) + n H(+)(out). In terms of biological role, NDH-1 shuttles electrons from an unknown electron donor, via FMN and iron-sulfur (Fe-S) centers, to quinones in the respiratory and/or the photosynthetic chain. The immediate electron acceptor for the enzyme in this species is believed to be plastoquinone. Couples the redox reaction to proton translocation, and thus conserves the redox energy in a proton gradient. Cyanobacterial NDH-1 also plays a role in inorganic carbon-concentration. The sequence is that of NAD(P)H-quinone oxidoreductase subunit 3 from Synechococcus sp. (strain WH7803).